The chain runs to 93 residues: Small ribosomal subunit protein uS19 (93 aa).

It belongs to the universal ribosomal protein uS19 family.

In terms of biological role, protein S19 forms a complex with S13 that binds strongly to the 16S ribosomal RNA. The polypeptide is Small ribosomal subunit protein uS19 (Leuconostoc citreum (strain KM20)).